We begin with the raw amino-acid sequence, 655 residues long: Protein npp-24 (655 aa).

A helical transmembrane segment spans residues 263–283; sequence ICSVFVLVSGGGVLSHLVVFP.

The protein resides in the membrane. This chain is Protein npp-24, found in Caenorhabditis elegans.